The chain runs to 1027 residues: C2 and GRAM domain-containing protein At5g50170 (1027 aa).

One can recognise a C2 1 domain in the interval 1 to 103 (MRLYVYILQA…ENQTLLPTWF (103 aa)). Positions 158–167 (SPKDLISSRD) are enriched in basic and acidic residues. Disordered regions lie at residues 158 to 177 (SPKDLISSRDGKRRKHHDGK) and 201 to 223 (LHDESSVGQSVNSNYEDATDQCS). Over residues 168–177 (GKRRKHHDGK) the composition is skewed to basic residues. Over residues 206–223 (SVGQSVNSNYEDATDQCS) the composition is skewed to polar residues. The VASt 1 domain maps to 253–426 (TGGVLVDQKY…LLAKTYKTLD (174 aa)). The chain crosses the membrane as a helical span at residues 452-472 (FLYFWSSSVICAVLLSVYVVV). The C2 2 domain occupies 516 to 639 (TVHFVQARLH…TADELADLSV (124 aa)). In terms of domain architecture, GRAM spans 693 to 756 (AFQKLFGLPH…LWEDIDDIQV (64 aa)). The region spanning 855–1018 (MMSKVYTCDL…VIFDLFQKES (164 aa)) is the VASt 2 domain.

It is found in the membrane. The chain is C2 and GRAM domain-containing protein At5g50170 from Arabidopsis thaliana (Mouse-ear cress).